Consider the following 1692-residue polypeptide: Cullin-7 (1692 aa).

The CPH domain occupies 348–421 (RTAFASVNTY…HWHMLEILGF (74 aa)). The region spanning 791 to 970 (PIQIPFFDVF…HTRLFYMVRA (180 aa)) is the DOC domain. Over residues 1319 to 1335 (VAHEDSGKEHKSKKEDA) the composition is skewed to basic and acidic residues. The segment at 1319 to 1374 (VAHEDSGKEHKSKKEDAAGETAAVAMADEEEEEGKKEEGEEEEGEGEEELEEEEER) is disordered. Residues 1357 to 1374 (GEEEEGEGEEELEEEEER) are compositionally biased toward acidic residues. Lys-1570 participates in a covalent cross-link: Glycyl lysine isopeptide (Lys-Gly) (interchain with G-Cter in NEDD8).

This sequence belongs to the cullin family. In terms of assembly, component of the 3M complex, composed of core components CUL7, CCDC8 and OBSL1. Component of the Cul7-RING(FBXW8) complex consisting of CUL7, RBX1, SKP1 and FBXW8. Within the Cul7-RING(FBXW8) complex interacts with FBXW8 and RBX1, but not with SKP1. Interacts with CUL1 (via the C-terminal domain); the interaction seems to be mediated by FBXW8; it is likely specific to FBXW8, but not other F-box proteins. Interacts (via the CPH domain) with p53/TP53; the interaction preferentially involves tetrameric and dimeric p53/TP53; this interaction recruits p53/TP53 for ubiquitination by neddylated CUL1-RBX1. The CUL7-CUL9 heterodimer seems to interact specifically with p53/TP53. Interacts with FBXW8; interaction is mutually exclusive of binding to CUL9 or p53/TP53. Interacts with CUL9; leading to inhibited CUL9 activity. Interacts with OBSL1. Interacts (as part of the 3M complex) with HDAC4 and HDAC5; it is negatively regulated by ANKRA2.

It localises to the cytoplasm. The protein localises to the cytoskeleton. Its subcellular location is the microtubule organizing center. The protein resides in the centrosome. It is found in the perinuclear region. It localises to the golgi apparatus. The protein operates within protein modification; protein ubiquitination. Core component of the 3M and Cul7-RING(FBXW8) complexes, which mediate the ubiquitination and subsequent proteasomal degradation of target proteins. Core component of the 3M complex, a complex required to regulate microtubule dynamics and genome integrity. It is unclear how the 3M complex regulates microtubules, it could act by controlling the level of a microtubule stabilizer. The Cul7-RING(FBXW8) complex alone lacks ubiquitination activity and does not promote polyubiquitination and proteasomal degradation of p53/TP53. However it mediates recruitment of p53/TP53 for ubiquitination by neddylated CUL1-RBX1. Interaction with CUL9 is required to inhibit CUL9 activity and ubiquitination of BIRC5. The Cul7-RING(FBXW8) complex also mediates ubiquitination and consequent degradation of target proteins such as GORASP1, IRS1 and MAP4K1/HPK1. Ubiquitination of GORASP1 regulates Golgi morphogenesis and dendrite patterning in brain. Mediates ubiquitination and degradation of IRS1 in a mTOR-dependent manner: the Cul7-RING(FBXW8) complex recognizes and binds IRS1 previously phosphorylated by S6 kinase (RPS6KB1 or RPS6KB2). The Cul7-RING(FBXW8) complex also mediates ubiquitination of MAP4K1/HPK1: recognizes and binds autophosphorylated MAP4K1/HPK1, leading to its degradation, thereby affecting cell proliferation and differentiation. Acts as a regulator in trophoblast cell epithelial-mesenchymal transition and placental development. While the Cul7-RING(FBXW8) and the 3M complexes are associated and involved in common processes, CUL7 and the Cul7-RING(FBXW8) complex may have additional functions. Probably plays a role in the degradation of proteins involved in endothelial proliferation and/or differentiation. The protein is Cullin-7 (Cul7) of Rattus norvegicus (Rat).